We begin with the raw amino-acid sequence, 89 residues long: Small ribosomal subunit protein uS15 (89 aa).

Residues M1–E10 are compositionally biased toward basic and acidic residues. Residues M1 to S24 form a disordered region.

This sequence belongs to the universal ribosomal protein uS15 family. In terms of assembly, part of the 30S ribosomal subunit. Forms a bridge to the 50S subunit in the 70S ribosome, contacting the 23S rRNA.

In terms of biological role, one of the primary rRNA binding proteins, it binds directly to 16S rRNA where it helps nucleate assembly of the platform of the 30S subunit by binding and bridging several RNA helices of the 16S rRNA. Functionally, forms an intersubunit bridge (bridge B4) with the 23S rRNA of the 50S subunit in the ribosome. The chain is Small ribosomal subunit protein uS15 from Novosphingobium aromaticivorans (strain ATCC 700278 / DSM 12444 / CCUG 56034 / CIP 105152 / NBRC 16084 / F199).